Consider the following 68-residue polypeptide: Large ribosomal subunit protein bL31 (68 aa).

Positions 16, 18, 36, and 39 each coordinate Zn(2+).

Belongs to the bacterial ribosomal protein bL31 family. Type A subfamily. In terms of assembly, part of the 50S ribosomal subunit. It depends on Zn(2+) as a cofactor.

Functionally, binds the 23S rRNA. This Dictyoglomus thermophilum (strain ATCC 35947 / DSM 3960 / H-6-12) protein is Large ribosomal subunit protein bL31.